The primary structure comprises 130 residues: Small ribosomal subunit protein uS9 (130 aa).

The protein belongs to the universal ribosomal protein uS9 family.

This Marinobacter nauticus (strain ATCC 700491 / DSM 11845 / VT8) (Marinobacter aquaeolei) protein is Small ribosomal subunit protein uS9.